A 199-amino-acid chain; its full sequence is MLLELSEEHKEHLAFLPQVDSAVVAEFGRIAVEFLRRGANPKIYEGAARKLNVSSDTVQHGVEGLTYLLTESSKLMISELDFQDSVFVLGFSEELNKLLLQLYLDNRKEIRTILSELAPSLPSYHNLEWRLDVQLASRSLRQQIKPAVTIKLHLNQNGDHNTKVLQTDPATLLHLVQQLEQALEEMKTNHCRRVVRNIK.

One can recognise a COMM domain in the interval 123-190; the sequence is SYHNLEWRLD…QALEEMKTNH (68 aa).

This sequence belongs to the COMM domain-containing protein 2 family. In terms of assembly, component of the commander complex consisting of the CCC subcomplex and the retriever subcomplex. Component of the CCC (COMMD/CCDC22/CCDC93) subcomplex consisting of COMMD1, COMMD2, COMMD3, COMMD4, COMMD5, COMMD6, COMMD7, COMMD8, COMMD9, COMMD10, CCDC22 and CCDC93; within the complex forms a heterodimer with COMMD3. Interacts with RELA, RELB, NFKB1/p105, NFKB2/p100. Interacts with CCDC22, CCDC93, SCNN1B, CUL3, CUL4B, CUL5, CUL7. As to expression, ubiquitous.

The protein localises to the cytoplasm. Functionally, scaffold protein in the commander complex that is essential for endosomal recycling of transmembrane cargos; the commander complex is composed of the CCC subcomplex and the retriever subcomplex. May modulate activity of cullin-RING E3 ubiquitin ligase (CRL) complexes. May down-regulate activation of NF-kappa-B. The chain is COMM domain-containing protein 2 (COMMD2) from Homo sapiens (Human).